Here is a 556-residue protein sequence, read N- to C-terminus: Melanoma-associated antigen B4 (556 aa).

Over residues 1–15 (MPRGQKSKARAREKR) the composition is skewed to basic residues. A disordered region spans residues 1–110 (MPRGQKSKAR…RFSENPQNDL (110 aa)). The segment covering 39 to 73 (PSCSNQDSGDAVASTSTAGFPQKSKSQGEAPTTTA) has biased composition (polar residues). A compositionally biased stretch (basic residues) spans 77–87 (GACRRSRKSTR). In terms of domain architecture, MAGE spans 111–310 (LTRKTGMLMQ…QAFPTHYEEA (200 aa)). The segment at 315 to 335 (EERAQAEAVGSPGTSAKDKAE) is disordered. A Phosphoserine modification is found at S325. A run of 15 repeats spans residues 334–348 (AEAKVTLVDSSCKYQ), 349–363 (AESKVTLVDSSCKDQ), 364–378 (AESKVTLVDPSCKDN), 379–392 (AKSKVTLGSSRKYK), 393–407 (AKSKVPLVDSSCKDQ), 408–421 (AESKVTLVDSCKDQ), 422–436 (AESKVTLVDSSCKDQ), 437–451 (AESKVTLVDSSCKDQ), 452–466 (AESKVTLVDPSCKDK), 467–480 (AKSKVTLGSSHKYK), 481–495 (AKSKVTLVDSSCKDQ), 496–510 (AESKVTLVDSSCKDQ), 511–525 (AESKVTLVDPSCKDN), 526–539 (AKSKVTLGSSRKYK), and 540–554 (AKSKVPLVDSSGKDK). Residues 334-554 (AEAKVTLVDS…PLVDSSGKDK (221 aa)) are 15 X 15 AA approximate tandem repeats.

In terms of tissue distribution, expressed in testis (at protein level).

Its subcellular location is the cytoplasm. The sequence is that of Melanoma-associated antigen B4 from Mus musculus (Mouse).